The following is a 384-amino-acid chain: Glucans biosynthesis protein C (384 aa).

The next 10 helical transmembrane spans lie at 17 to 37 (AWLMLLGIPFHISLIYSTHSW), 54 to 74 (FIHAFRMQVFFVISGYFSYML), 91 to 111 (VGIPMLTAIPLLTLPQFILLQ), 140 to 160 (LWFLLVLVILTTVSIGIFTWF), 173 to 193 (AISLAKLSLIFFLLGVAYAAI), 212 to 232 (FIVMQTLFYVPFFILGALAFI), 240 to 260 (FTTPSRGCTLGAAVAFIAYLL), 274 to 294 (TESVITMVMGLWMVNVVFSLG), 311 to 331 (ASLFIYLVHHPLTLFFGAYIT), and 338 to 358 (LIGFLCGLIFVMGIALILYEI).

The protein belongs to the acyltransferase 3 family. OpgC subfamily.

Its subcellular location is the cell membrane. Its pathway is glycan metabolism; osmoregulated periplasmic glucan (OPG) biosynthesis. In terms of biological role, necessary for the succinyl substitution of periplasmic glucans. Could catalyze the transfer of succinyl residues from the cytoplasmic side of the membrane to the nascent glucan backbones on the periplasmic side of the membrane. This Salmonella typhi protein is Glucans biosynthesis protein C.